The sequence spans 38 residues: Kappa-actitoxin-Bcs3a (38 aa).

The 36-residue stretch at 2 to 37 (CIDRFPTGTCKHVKKGGSCKNSQKYRINCAKTCGLC) folds into the ShKT domain. Disulfide bonds link Cys2–Cys37, Cys11–Cys30, and Cys20–Cys34. Positions 25–26 (KY) are crucial for binding to potassium channels.

The protein belongs to the sea anemone type 1 potassium channel toxin family. Type 1b subfamily.

The protein localises to the secreted. Its subcellular location is the nematocyst. Inhibits voltage-gated potassium channels (IC(50)=405.0 nM for rKCNA1/Kv1.1, IC(50)=0.03 nM for rKCNA2/Kv1.2, IC(50)=1.31 nM for rKCNA6/Kv1.6, IC(50)=74.11 nM for hKCNA3/Kv1.3, and IC(50)=247.69 nM for insect Shaker IR). Binds the Shaker IR channels in a voltage-independent manner. The protein is Kappa-actitoxin-Bcs3a of Bunodosoma caissarum (Sea anemone).